A 71-amino-acid polypeptide reads, in one-letter code: SRY-related protein LG28 (71 aa).

A DNA-binding region (HMG box) is located at residues 1–68; it reads VKRPMNAFMV…KHMADYPDYK (68 aa).

Its subcellular location is the nucleus. This is SRY-related protein LG28 from Eublepharis macularius (Leopard gecko).